The sequence spans 159 residues: MNKNTQGKPSGKPVRRDGVDPVLRSRARRRAVQAIYAWQISGGNAQSLIAQFAHEQAREIADLAYFEALLHGVLDNRRDIDEALGPYLDRGIEEVDAIERAVLRLAGYELRYRLDVPYRVVINEAIESAKRFGSEHGHTYVNGVLDRAAVEWRKVESGH.

This sequence belongs to the NusB family.

Functionally, involved in transcription antitermination. Required for transcription of ribosomal RNA (rRNA) genes. Binds specifically to the boxA antiterminator sequence of the ribosomal RNA (rrn) operons. The chain is Transcription antitermination protein NusB from Stenotrophomonas maltophilia (strain K279a).